The chain runs to 92 residues: Small ribosomal subunit protein uS19c (92 aa).

This sequence belongs to the universal ribosomal protein uS19 family.

The protein resides in the plastid. It localises to the chloroplast. Its function is as follows. Protein S19 forms a complex with S13 that binds strongly to the 16S ribosomal RNA. The protein is Small ribosomal subunit protein uS19c of Ceratophyllum demersum (Rigid hornwort).